The following is a 334-amino-acid chain: Glycerol-3-phosphate dehydrogenase [NAD(P)+] (334 aa).

NADPH is bound by residues S14, Y15, H35, and K109. Sn-glycerol 3-phosphate is bound by residues K109, G138, and T140. Residue A142 coordinates NADPH. 5 residues coordinate sn-glycerol 3-phosphate: K194, D247, S257, R258, and N259. K194 acts as the Proton acceptor in catalysis. An NADPH-binding site is contributed by R258. NADPH contacts are provided by V282 and E284.

Belongs to the NAD-dependent glycerol-3-phosphate dehydrogenase family.

It is found in the cytoplasm. The catalysed reaction is sn-glycerol 3-phosphate + NAD(+) = dihydroxyacetone phosphate + NADH + H(+). The enzyme catalyses sn-glycerol 3-phosphate + NADP(+) = dihydroxyacetone phosphate + NADPH + H(+). It participates in membrane lipid metabolism; glycerophospholipid metabolism. Its function is as follows. Catalyzes the reduction of the glycolytic intermediate dihydroxyacetone phosphate (DHAP) to sn-glycerol 3-phosphate (G3P), the key precursor for phospholipid synthesis. The sequence is that of Glycerol-3-phosphate dehydrogenase [NAD(P)+] from Aeromonas salmonicida (strain A449).